Consider the following 214-residue polypeptide: Variable small protein 1 (214 aa).

Positions 1-18 (MRKRISAIIMTLFMVFMS) are cleaved as a signal peptide. Cysteine 19 carries N-palmitoyl cysteine lipidation. Cysteine 19 carries the S-diacylglycerol cysteine lipid modification.

It belongs to the variable small protein (Vsp) family.

The protein resides in the cell outer membrane. In terms of biological role, the Vlp and Vsp proteins are antigenically distinct proteins, only one vlp or vsp gene is transcriptionally active at any one time. Switching between these genes is a mechanism of host immune response evasion. The protein is Variable small protein 1 of Borrelia hermsii.